The sequence spans 130 residues: Small ribosomal subunit protein uS11 (130 aa).

It belongs to the universal ribosomal protein uS11 family. Part of the 30S ribosomal subunit. Interacts with proteins S7 and S18. Binds to IF-3.

Functionally, located on the platform of the 30S subunit, it bridges several disparate RNA helices of the 16S rRNA. Forms part of the Shine-Dalgarno cleft in the 70S ribosome. The chain is Small ribosomal subunit protein uS11 from Acholeplasma laidlawii (strain PG-8A).